We begin with the raw amino-acid sequence, 339 residues long: Ketol-acid reductoisomerase (NADP(+)) (339 aa).

One can recognise a KARI N-terminal Rossmann domain in the interval Met1–Thr182. NADP(+) contacts are provided by residues Tyr24–Gln27, Arg48, Ser51, Ser53, and Asp83–Gln86. His108 is an active-site residue. Gly134 is a binding site for NADP(+). The 146-residue stretch at Thr183–Ile328 folds into the KARI C-terminal knotted domain. The Mg(2+) site is built by Asp191, Glu195, Glu227, and Glu231. Ser252 is a substrate binding site.

Belongs to the ketol-acid reductoisomerase family. Mg(2+) is required as a cofactor.

The enzyme catalyses (2R)-2,3-dihydroxy-3-methylbutanoate + NADP(+) = (2S)-2-acetolactate + NADPH + H(+). It carries out the reaction (2R,3R)-2,3-dihydroxy-3-methylpentanoate + NADP(+) = (S)-2-ethyl-2-hydroxy-3-oxobutanoate + NADPH + H(+). It participates in amino-acid biosynthesis; L-isoleucine biosynthesis; L-isoleucine from 2-oxobutanoate: step 2/4. Its pathway is amino-acid biosynthesis; L-valine biosynthesis; L-valine from pyruvate: step 2/4. In terms of biological role, involved in the biosynthesis of branched-chain amino acids (BCAA). Catalyzes an alkyl-migration followed by a ketol-acid reduction of (S)-2-acetolactate (S2AL) to yield (R)-2,3-dihydroxy-isovalerate. In the isomerase reaction, S2AL is rearranged via a Mg-dependent methyl migration to produce 3-hydroxy-3-methyl-2-ketobutyrate (HMKB). In the reductase reaction, this 2-ketoacid undergoes a metal-dependent reduction by NADPH to yield (R)-2,3-dihydroxy-isovalerate. This chain is Ketol-acid reductoisomerase (NADP(+)), found in Rhodopseudomonas palustris (strain ATCC BAA-98 / CGA009).